The primary structure comprises 275 residues: Uroporphyrinogen-III synthase (275 aa).

Belongs to the uroporphyrinogen-III synthase family.

It carries out the reaction hydroxymethylbilane = uroporphyrinogen III + H2O. The protein operates within porphyrin-containing compound metabolism; protoporphyrin-IX biosynthesis; coproporphyrinogen-III from 5-aminolevulinate: step 3/4. Catalyzes cyclization of the linear tetrapyrrole, hydroxymethylbilane, to the macrocyclic uroporphyrinogen III, the fourth step in the heme biosynthetic pathway. This chain is Uroporphyrinogen-III synthase, found in Saccharomyces cerevisiae (strain ATCC 204508 / S288c) (Baker's yeast).